Here is a 177-residue protein sequence, read N- to C-terminus: ATP synthase subunit delta (177 aa).

The protein belongs to the ATPase delta chain family. F-type ATPases have 2 components, F(1) - the catalytic core - and F(0) - the membrane proton channel. F(1) has five subunits: alpha(3), beta(3), gamma(1), delta(1), epsilon(1). F(0) has three main subunits: a(1), b(2) and c(10-14). The alpha and beta chains form an alternating ring which encloses part of the gamma chain. F(1) is attached to F(0) by a central stalk formed by the gamma and epsilon chains, while a peripheral stalk is formed by the delta and b chains.

It is found in the cell membrane. F(1)F(0) ATP synthase produces ATP from ADP in the presence of a proton or sodium gradient. F-type ATPases consist of two structural domains, F(1) containing the extramembraneous catalytic core and F(0) containing the membrane proton channel, linked together by a central stalk and a peripheral stalk. During catalysis, ATP synthesis in the catalytic domain of F(1) is coupled via a rotary mechanism of the central stalk subunits to proton translocation. Functionally, this protein is part of the stalk that links CF(0) to CF(1). It either transmits conformational changes from CF(0) to CF(1) or is implicated in proton conduction. The polypeptide is ATP synthase subunit delta (Buchnera aphidicola subsp. Acyrthosiphon pisum (strain APS) (Acyrthosiphon pisum symbiotic bacterium)).